A 334-amino-acid chain; its full sequence is Stabilizer of axonemal microtubules 3 (334 aa).

3 disordered regions span residues 81–105, 128–153, and 233–260; these read AYVPKTHGGPCAQPRAPEPADPTRT, YQSSETRAQYTGSPSGDPRAPEYFGP, and QVWSHGPQRPPCPRSSRPPRPPRVRVPR. Positions 128 to 141 are enriched in polar residues; it reads YQSSETRAQYTGSP. Over residues 240–251 the composition is skewed to pro residues; the sequence is QRPPCPRSSRPP.

The sequence is that of Stabilizer of axonemal microtubules 3 from Homo sapiens (Human).